Here is a 143-residue protein sequence, read N- to C-terminus: uncharacterized protein (143 aa).

A disordered region spans residues 1–37; it reads MSAPASSSAIAPSQPTAPGHARHSASWSASASDPSGA.

It belongs to the dynein light chain Tctex-type family.

This is an uncharacterized protein from Mycosarcoma maydis (Corn smut fungus).